Consider the following 1821-residue polypeptide: Latent-transforming growth factor beta-binding protein 2 (1821 aa).

Positions 1-35 (MRPRTKARSPGRALRNPWRGFLPLTLALFVGAGHA) are cleaved as a signal peptide. 2 disordered regions span residues 38 to 58 (DPVGRYEPAGGDANRLRRPGG) and 81 to 165 (GLQP…RLTG). Positions 94–115 (SPRRPTEAEARRPSRAQQSRRV) are heparin-binding. Low complexity-rich tracts occupy residues 108-120 (RAQQSRRVQPPAQ) and 129-145 (QQQPAPRTRAAPALPRL). The N-linked (GlcNAc...) asparagine glycan is linked to asparagine 181. An EGF-like 1 domain is found at 187–219 (IKPVCEPPCQNRGSCSRPQLCVCRSGFRGARCE). Intrachain disulfides connect cysteine 191–cysteine 201, cysteine 195–cysteine 207, and cysteine 209–cysteine 218. The interval 229–339 (PQNSRLAPRR…AVPLEHPSSP (111 aa)) is disordered. The tract at residues 232–249 (SRLAPRRWAERSPNLRRS) is heparin-binding. The segment covering 262–274 (PPAPQSPPAPQSP) has biased composition (pro residues). Composition is skewed to polar residues over residues 280-292 (SGLSQTHPSQQHV) and 304-314 (ATASSQLSSNA). The N-linked (GlcNAc...) asparagine glycan is linked to asparagine 343. A heparin-binding site is contributed by 344–354 (LTEKIKKIKIV). The Cell attachment site signature appears at 375 to 377 (RGD). The region spanning 396–428 (RIYFCQIPCLNGGRCIGRDECWCPANSTGKFCH) is the EGF-like 2 domain. 3 disulfides stabilise this stretch: cysteine 400/cysteine 410, cysteine 404/cysteine 416, and cysteine 418/cysteine 427. Residue asparagine 421 is glycosylated (N-linked (GlcNAc...) asparagine). Serine 506 bears the Phosphoserine mark. The segment at 510–544 (RPPPWLPASPGHSLWDSNNIPARSGEPPRPLPPAA) is disordered. The TB 1 domain maps to 552-604 (GRCYLNTVNGQCANPLLELTTQEDCCGSVGAFWGVTLCAPCPPRPASPVIENG). Intrachain disulfides connect cysteine 554-cysteine 576, cysteine 563-cysteine 589, and cysteine 577-cysteine 592. The N-linked (GlcNAc...) asparagine glycan is linked to asparagine 616. An EGF-like 3; calcium-binding domain is found at 622–662 (DINECLTLGLCKDAECVNTRGSYLCTCRPGLMLDPSRSRCV). Cystine bridges form between cysteine 626-cysteine 637, cysteine 632-cysteine 646, cysteine 648-cysteine 661, cysteine 674-cysteine 696, cysteine 683-cysteine 709, cysteine 697-cysteine 712, and cysteine 698-cysteine 724. Positions 672–724 (GLCYRSLGPGTCTLPLAQRITKQICCCSRVGKAWGSECEKCPLPGTEAFREIC) constitute a TB 2 domain. Positions 744 to 757 (AEEEELARPPREQG) are enriched in basic and acidic residues. The tract at residues 744–772 (AEEEELARPPREQGQRSSGALPGPAERQP) is disordered. The N-linked (GlcNAc...) asparagine glycan is linked to asparagine 811. The EGF-like 4 domain occupies 844-886 (GIDRCAAGATNVCGPGTCVNLPDGYRCVCSPGYQLHPSQAYCT). 49 disulfide bridges follow: cysteine 848–cysteine 861, cysteine 856–cysteine 870, cysteine 872–cysteine 885, cysteine 891–cysteine 902, cysteine 896–cysteine 911, cysteine 913–cysteine 928, cysteine 934–cysteine 945, cysteine 940–cysteine 954, cysteine 956–cysteine 968, cysteine 974–cysteine 985, cysteine 980–cysteine 994, cysteine 997–cysteine 1008, cysteine 1014–cysteine 1025, cysteine 1020–cysteine 1034, cysteine 1036–cysteine 1049, cysteine 1055–cysteine 1066, cysteine 1061–cysteine 1075, cysteine 1078–cysteine 1091, cysteine 1097–cysteine 1108, cysteine 1103–cysteine 1117, cysteine 1120–cysteine 1133, cysteine 1139–cysteine 1151, cysteine 1146–cysteine 1160, cysteine 1162–cysteine 1174, cysteine 1180–cysteine 1192, cysteine 1186–cysteine 1201, cysteine 1203–cysteine 1216, cysteine 1222–cysteine 1233, cysteine 1228–cysteine 1242, cysteine 1244–cysteine 1257, cysteine 1263–cysteine 1276, cysteine 1271–cysteine 1285, cysteine 1289–cysteine 1301, cysteine 1307–cysteine 1319, cysteine 1313–cysteine 1328, cysteine 1330–cysteine 1343, cysteine 1349–cysteine 1361, cysteine 1356–cysteine 1370, cysteine 1372–cysteine 1386, cysteine 1413–cysteine 1436, cysteine 1423–cysteine 1448, cysteine 1437–cysteine 1451, cysteine 1438–cysteine 1463, cysteine 1489–cysteine 1502, cysteine 1497–cysteine 1511, cysteine 1513–cysteine 1526, cysteine 1532–cysteine 1542, cysteine 1537–cysteine 1551, and cysteine 1553–cysteine 1566. Positions 887–929 (DDNECLRDPCKGKGRCINRVGSYSCFCYPGYTLATSGATQECQ) constitute an EGF-like 5; calcium-binding domain. The 40-residue stretch at 930–969 (DINECEQPGVCSGGQCTNTEGSYHCECDQGYIMVRKGHCQ) folds into the EGF-like 6; calcium-binding domain. Residues 970-1009 (DINECRHPGTCPDGRCVNSPGSYTCLACEEGYRGQSGSCV) form the EGF-like 7; calcium-binding domain. The EGF-like 8; calcium-binding domain maps to 1010–1050 (DVNECLTPGVCAHGKCTNLEGSFRCSCEQGYEVTSDEKGCQ). The EGF-like 9; calcium-binding domain occupies 1051-1092 (DVDECASRASCPTGLCLNTEGSFACSACENGYWVNEDGTACE). Positions 1093 to 1134 (DLDECAFPGVCPSGVCTNTAGSFSCKDCDGGYRPSPLGDSCE) constitute an EGF-like 10; calcium-binding domain. Positions 1135 to 1175 (DVDECEDPQSSCLGGECKNTVGSYQCLCPQGFQLANGTVCE) constitute an EGF-like 11; calcium-binding domain. Asparagine 1170 is a glycosylation site (N-linked (GlcNAc...) asparagine). In terms of domain architecture, EGF-like 12; calcium-binding spans 1176 to 1217 (DVNECMGEEHCAPHGECLNSHGSFFCLCAPGFVSAEGGTSCQ). The EGF-like 13; calcium-binding domain occupies 1218–1258 (DVDECATTDPCVGGHCVNTEGSFNCLCETGFQPSPESGECV). One can recognise an EGF-like 14; calcium-binding domain in the interval 1259–1302 (DIDECEDYGDPVCGTWKCENSPGSYRCVLGCQPGFHMAPNGDCI). One can recognise an EGF-like 15; calcium-binding domain in the interval 1303–1344 (DIDECANDTMCGSHGFCDNTDGSFRCLCDQGFEISPSGWDCV). Asparagine 1309 carries N-linked (GlcNAc...) asparagine glycosylation. The EGF-like 16; calcium-binding domain maps to 1345-1387 (DVNECELMLAVCGAALCENVEGSFLCLCASDLEEYDAQEGHCR). One can recognise a TB 3 domain in the interval 1411–1463 (MDCYSGQKGHAPCSSVLGRNTTQAECCCTQGASWGDACDLCPSEDSAEFSEIC). N-linked (GlcNAc...) asparagine glycosylation is present at asparagine 1430. The EGF-like 17; calcium-binding domain maps to 1485–1527 (DADECVIFGPGLCPNGRCLNTVPGYVCLCNPGFHYDASHKKCE). An EGF-like 18; calcium-binding domain is found at 1528–1567 (DHDECQDLACENGECVNTEGSFHCFCSPPLTLDLSQQRCM). A glycan (N-linked (GlcNAc...) asparagine) is linked at asparagine 1568. The TB 4 domain occupies 1584–1636 (DICWKKVTNDVCSEPLRGHRTTYTECCCQDGEAWSQQCALCPPRSSEVYAQLC). 10 disulfide bridges follow: cysteine 1586/cysteine 1609, cysteine 1595/cysteine 1621, cysteine 1610/cysteine 1624, cysteine 1611/cysteine 1636, cysteine 1737/cysteine 1748, cysteine 1743/cysteine 1757, cysteine 1759/cysteine 1772, cysteine 1778/cysteine 1793, cysteine 1788/cysteine 1802, and cysteine 1804/cysteine 1817. The tract at residues 1639-1821 (ARIEAEREAG…AGPPHCTAKE (183 aa)) is C-terminal domain. Residues 1733–1773 (QAEECGILNGCENGRCVRVREGYTCDCFEGFQLDAAHMACV) form the EGF-like 19; calcium-binding domain. An EGF-like 20; calcium-binding domain is found at 1774–1818 (DVNECDDLNGPAVLCVHGYCENTEGSYRCHCSPGYVAEAGPPHCT).

This sequence belongs to the LTBP family. In terms of assembly, forms part of the large latent transforming growth factor beta precursor complex; removal is essential for activation of complex. Interacts with SDC4. Interacts (via C-terminal domain) with FBN1 (via N-terminal domain) in a Ca(+2)-dependent manner. In terms of processing, N-Glycosylated. Contains hydroxylated asparagine residues. In terms of tissue distribution, expressed in the aorta (at protein level). Expressed in lung, weakly expressed in heart, placenta, liver and skeletal muscle.

The protein resides in the secreted. The protein localises to the extracellular space. Its subcellular location is the extracellular matrix. Its function is as follows. May play an integral structural role in elastic-fiber architectural organization and/or assembly. The polypeptide is Latent-transforming growth factor beta-binding protein 2 (LTBP2) (Homo sapiens (Human)).